Consider the following 263-residue polypeptide: HTH-type transcriptional repressor NanR (263 aa).

A disordered region spans residues 1-22 (MGLMNAFDSQTEDSSPAIGRNL). The HTH gntR-type domain occupies 30-98 (KKLSEMVEEE…NGERARVSRP (69 aa)). A DNA-binding region (H-T-H motif) is located at residues 58–77 (ERELMAFFNVGRPSVREALA).

Belongs to the NanR family.

Transcriptional repressor that controls expression of the genes required for the catabolism of sialic acids. The protein is HTH-type transcriptional repressor NanR of Escherichia coli (strain 55989 / EAEC).